Here is a 637-residue protein sequence, read N- to C-terminus: 1-deoxy-D-xylulose-5-phosphate synthase (637 aa).

Residues His73 and 113-115 (SHA) contribute to the thiamine diphosphate site. Asp144 contacts Mg(2+). Residues 145–146 (GA), Asn174, Tyr285, and Glu366 each bind thiamine diphosphate. Residue Asn174 participates in Mg(2+) binding.

The protein belongs to the transketolase family. DXPS subfamily. As to quaternary structure, homodimer. It depends on Mg(2+) as a cofactor. Thiamine diphosphate is required as a cofactor.

It catalyses the reaction D-glyceraldehyde 3-phosphate + pyruvate + H(+) = 1-deoxy-D-xylulose 5-phosphate + CO2. Its pathway is metabolic intermediate biosynthesis; 1-deoxy-D-xylulose 5-phosphate biosynthesis; 1-deoxy-D-xylulose 5-phosphate from D-glyceraldehyde 3-phosphate and pyruvate: step 1/1. In terms of biological role, catalyzes the acyloin condensation reaction between C atoms 2 and 3 of pyruvate and glyceraldehyde 3-phosphate to yield 1-deoxy-D-xylulose-5-phosphate (DXP). The sequence is that of 1-deoxy-D-xylulose-5-phosphate synthase from Streptomyces griseus subsp. griseus (strain JCM 4626 / CBS 651.72 / NBRC 13350 / KCC S-0626 / ISP 5235).